Here is a 152-residue protein sequence, read N- to C-terminus: Interleukin-3 (152 aa).

A signal peptide spans 1–19; that stretch reads MSRLPVLLLLQLLVRPGLQ. 2 N-linked (GlcNAc...) asparagine glycosylation sites follow: Asn34 and Asn89. Residues Cys35 and Cys103 are joined by a disulfide bond.

This sequence belongs to the IL-3 family. In terms of assembly, interacts with IL3RA. As to expression, activated T-cells, mast cells, natural killer cells.

The protein resides in the secreted. Cytokine secreted predominantly by activated T-lymphocytes as well as mast cells and osteoblastic cells that controls the production and differentiation of hematopoietic progenitor cells into lineage-restricted cells. Also stimulates mature basophils, eosinophils, and monocytes to become functionally activated. In addition, plays an important role in neural cell proliferation and survival. Participates as well in bone homeostasis and inhibits osteoclast differentiation by preventing NF-kappa-B nuclear translocation and activation. Mechanistically, exerts its biological effects through a receptor composed of IL3RA subunit and a signal transducing subunit IL3RB. Receptor stimulation results in the rapid activation of JAK2 kinase activity leading to STAT5-mediated transcriptional program. Alternatively, contributes to cell survival under oxidative stress in non-hematopoietic systems by activating pathways mediated by PI3K/AKT and ERK. This Homo sapiens (Human) protein is Interleukin-3.